The primary structure comprises 246 residues: Probable cytokinin riboside 5'-monophosphate phosphoribohydrolase LOGL5 (246 aa).

Residues 1-10 (MMMENSREQQ) are compositionally biased toward basic and acidic residues. A disordered region spans residues 1 to 28 (MMMENSREQQPESSPANNNSKKKKKKKT). Substrate contacts are provided by residues glutamate 103, 121-122 (RK), 138-144 (GYGTLEE), and threonine 150.

The protein belongs to the LOG family. As to expression, expressed in roots and leaves.

The enzyme catalyses N(6)-(dimethylallyl)adenosine 5'-phosphate + H2O = N(6)-dimethylallyladenine + D-ribose 5-phosphate. It carries out the reaction 9-ribosyl-trans-zeatin 5'-phosphate + H2O = trans-zeatin + D-ribose 5-phosphate. Its function is as follows. Cytokinin-activating enzyme working in the direct activation pathway. Phosphoribohydrolase that converts inactive cytokinin nucleotides to the biologically active free-base forms. The chain is Probable cytokinin riboside 5'-monophosphate phosphoribohydrolase LOGL5 (LOGL5) from Oryza sativa subsp. japonica (Rice).